The following is a 431-amino-acid chain: Gamma-glutamyl phosphate reductase (431 aa).

The protein belongs to the gamma-glutamyl phosphate reductase family.

The protein resides in the cytoplasm. The catalysed reaction is L-glutamate 5-semialdehyde + phosphate + NADP(+) = L-glutamyl 5-phosphate + NADPH + H(+). Its pathway is amino-acid biosynthesis; L-proline biosynthesis; L-glutamate 5-semialdehyde from L-glutamate: step 2/2. Its function is as follows. Catalyzes the NADPH-dependent reduction of L-glutamate 5-phosphate into L-glutamate 5-semialdehyde and phosphate. The product spontaneously undergoes cyclization to form 1-pyrroline-5-carboxylate. This Synechococcus elongatus (strain ATCC 33912 / PCC 7942 / FACHB-805) (Anacystis nidulans R2) protein is Gamma-glutamyl phosphate reductase.